Reading from the N-terminus, the 338-residue chain is MQIFYDKDCDLSIIQSKKVAIIGYGSQGHAHALNLKDSGVDVTVGLRAGSASWKKAENAGLKVAEVPAAVKQADLVMILTPDEFQSQLYRDVIEPNIKEGATLAFAHGFSVLYNQVVPRKDLDVIMVAPKAPGHTVRSEFQRGSGVPDLIAIHQDASGNARNVALSYASGVGGGRTGIIETSFREETETDLFGEQAVLCGGAVELVKMGFETLVEAGYAPEMAYFECLHELKLIVDLMFEGGIADMNYSVSNNAEYGEYVTGPEVINEQSREAMRNALKRIQSGEYAKMFIQEGALNYPSMTARRRQNAAHGIEQTGAKLRAMMPWIQANKIVDKEKN.

The KARI N-terminal Rossmann domain occupies 1-181 (MQIFYDKDCD…GGGRTGIIET (181 aa)). NADP(+)-binding positions include 24 to 27 (YGSQ), arginine 47, serine 50, serine 52, and 82 to 85 (DEFQ). Histidine 107 is an active-site residue. Residue glycine 133 coordinates NADP(+). Residues 182–327 (SFREETETDL…AKLRAMMPWI (146 aa)) form the KARI C-terminal knotted domain. 4 residues coordinate Mg(2+): aspartate 190, glutamate 194, glutamate 226, and glutamate 230. Serine 251 is a binding site for substrate.

This sequence belongs to the ketol-acid reductoisomerase family. Mg(2+) serves as cofactor.

The catalysed reaction is (2R)-2,3-dihydroxy-3-methylbutanoate + NADP(+) = (2S)-2-acetolactate + NADPH + H(+). It catalyses the reaction (2R,3R)-2,3-dihydroxy-3-methylpentanoate + NADP(+) = (S)-2-ethyl-2-hydroxy-3-oxobutanoate + NADPH + H(+). Its pathway is amino-acid biosynthesis; L-isoleucine biosynthesis; L-isoleucine from 2-oxobutanoate: step 2/4. The protein operates within amino-acid biosynthesis; L-valine biosynthesis; L-valine from pyruvate: step 2/4. Its function is as follows. Involved in the biosynthesis of branched-chain amino acids (BCAA). Catalyzes an alkyl-migration followed by a ketol-acid reduction of (S)-2-acetolactate (S2AL) to yield (R)-2,3-dihydroxy-isovalerate. In the isomerase reaction, S2AL is rearranged via a Mg-dependent methyl migration to produce 3-hydroxy-3-methyl-2-ketobutyrate (HMKB). In the reductase reaction, this 2-ketoacid undergoes a metal-dependent reduction by NADPH to yield (R)-2,3-dihydroxy-isovalerate. The chain is Ketol-acid reductoisomerase (NADP(+)) from Acinetobacter baumannii (strain AB0057).